The chain runs to 94 residues: MVYISNGQVLDSRNQSPWRLSFITDFFWGIAEFVVFFFKTLLQQDVKKRRGYGGSSDSRYDDGRGPPGNPPRRMGRISHLRGPSPPPMAGGUGR.

The chain crosses the membrane as a helical span at residues 20–42 (LSFITDFFWGIAEFVVFFFKTLL). The segment at 48 to 94 (KRRGYGGSSDSRYDDGRGPPGNPPRRMGRISHLRGPSPPPMAGGUGR) is disordered. Sec-92 is a non-standard amino acid (selenocysteine).

It belongs to the selenoprotein K family. As to quaternary structure, interacts with DERL1, DERL2, DERL3 and SELENOS. The SELENOK-SELENOS complex interacts with VCP. Interacts with ZDHHC6. In terms of processing, cleaved by CAPN2/m-calpain in resting macrophages but not in activated macrophages. Macrophage activation up-regulates expression of the calpain inhibitor CAST/calpastatin, resulting in inhibition of CAPN2 activity. Post-translationally, truncated SELENOK proteins produced by failed UGA/Sec decoding are ubiquitinated by the CRL2(KLHDC2) complex, which recognizes the diglycine (Gly-Gly) at the C-terminus of truncated SELENOK proteins.

It is found in the endoplasmic reticulum membrane. It localises to the cell membrane. Its function is as follows. Required for Ca(2+) flux in immune cells and plays a role in T-cell proliferation and in T-cell and neutrophil migration. Involved in endoplasmic reticulum-associated degradation (ERAD) of soluble glycosylated proteins. Required for palmitoylation and cell surface expression of CD36 and involved in macrophage uptake of low-density lipoprotein and in foam cell formation. Together with ZDHHC6, required for palmitoylation of ITPR1 in immune cells, leading to regulate ITPR1 stability and function. Plays a role in protection of cells from ER stress-induced apoptosis. Protects cells from oxidative stress when overexpressed in cardiomyocytes. In Rattus norvegicus (Rat), this protein is Selenoprotein K.